The sequence spans 525 residues: Probable bifunctional tRNA threonylcarbamoyladenosine biosynthesis protein (525 aa).

The interval 1–322 (MPEKRVLGIE…FRSDQVEVTW (322 aa)) is kae1. The Fe cation site is built by His106, His110, and Tyr127. Residues 127-131 (YASGA), Asp159, Gly172, Glu176, and Asn255 contribute to the L-threonylcarbamoyladenylate site. Position 283 (Asp283) interacts with Fe cation. Residues 331-525 (APGQSETAER…HEIELRGRYL (195 aa)) enclose the Protein kinase domain. Residues 338–346 (AERGAEASV) and Lys355 contribute to the ATP site. Residue Asp442 is the Proton acceptor; for kinase activity of the active site.

It in the N-terminal section; belongs to the KAE1 / TsaD family. In the C-terminal section; belongs to the protein kinase superfamily. Tyr protein kinase family. BUD32 subfamily. In terms of assembly, component of the KEOPS complex that consists of Kae1, Bud32, Cgi121 and Pcc1; the whole complex dimerizes. The cofactor is Fe(2+).

The protein localises to the cytoplasm. It catalyses the reaction L-seryl-[protein] + ATP = O-phospho-L-seryl-[protein] + ADP + H(+). The enzyme catalyses L-threonyl-[protein] + ATP = O-phospho-L-threonyl-[protein] + ADP + H(+). It carries out the reaction L-threonylcarbamoyladenylate + adenosine(37) in tRNA = N(6)-L-threonylcarbamoyladenosine(37) in tRNA + AMP + H(+). Required for the formation of a threonylcarbamoyl group on adenosine at position 37 (t(6)A37) in tRNAs that read codons beginning with adenine. Is a component of the KEOPS complex that is probably involved in the transfer of the threonylcarbamoyl moiety of threonylcarbamoyl-AMP (TC-AMP) to the N6 group of A37. The Kae1 domain likely plays a direct catalytic role in this reaction. The Bud32 domain probably displays kinase activity that regulates Kae1 function. This chain is Probable bifunctional tRNA threonylcarbamoyladenosine biosynthesis protein, found in Methanocorpusculum labreanum (strain ATCC 43576 / DSM 4855 / Z).